A 530-amino-acid polypeptide reads, in one-letter code: MSKMASSIFATFSLLSSLLPTSLASSDANYEDFLQCLDLYSQNSIPVYTRNTSSYTSILESTIKNLVFLSPTTPKPNFIVTPMQESHVQTSVICCRMHGLQMRIRSGGHDFEGLSYVSNVPFVVLDLIHLKTINVDIEENSAWVQTGATIGELYYRIAEKVGVHAFPAGLCPTVGVGGHISGAGYGVLMRKYGVSADHVIDARIVNVDGEILDRESMGEDLFWAIRGGGGASFGVILAWKIRLVPVPPTVTIFIVPKTLEEGATALLHKWQFIGDNVHEDLFIGLSMRSVIISPKGDKTILVSFIGLFLGGSDKLVQHMEQSFPELGVKPHDCIEMSWIKSTVVFGVFSNDASLSVLLDRKNPFPPKSYHKVKSDYVTEPLPISVLEGICHRFLKNGVNKAEIIMSPYGGRMNEISESEIAFPHRKGNLYKINYIAEWEEAGSMENHLSWIRELYRYMTPYVSKSPRSSYLNFKDIDLGQTKNGTATYSQAKAWGSKYFKNNFKRLMQVKTKVDPNNFFCNEQGIPPFSS.

The N-terminal stretch at 1 to 24 (MSKMASSIFATFSLLSSLLPTSLA) is a signal peptide. C36 and C94 are disulfide-bonded. A glycan (N-linked (GlcNAc...) asparagine) is linked at N51. An FAD-binding PCMH-type domain is found at 72 to 246 (TTPKPNFIVT…LAWKIRLVPV (175 aa)). The segment at residues 109–171 (HDFEGLSYVS…GVHAFPAGLC (63 aa)) is a cross-link (6-(S-cysteinyl)-8alpha-(pros-histidyl)-FAD (His-Cys)). A glycan (N-linked (GlcNAc...) asparagine) is linked at N483.

This sequence belongs to the oxygen-dependent FAD-linked oxidoreductase family. FAD serves as cofactor. The FAD cofactor is bound via a bicovalent 6-S-cysteinyl, 8alpha-N1-histidyl FAD linkage.

The enzyme catalyses (S)-canadine + 2 O2 + H(+) = berberine + 2 H2O2. In terms of biological role, catalyzes the oxidation of different tetrahydroprotoberberines, such as (S)-canadine, (S)-scoulerine and (S)-corypalmine. Catalyzes the oxidation of (S)-coreximine and (S)-tetrahydropalmatine. Catalyzes the oxidation of different 1-benzylisoquinoline alkaloids, such as (S)-norreticuline, (S)-nororientaline, (S)-coclaurine and (S)-norisoorientaline. Exhibits strict specificity for the (S)-enantiomer of tetrahydroprotoberbirines and 1-benzylisoquinoline alkaloids. In Berberis wilsoniae (Mrs Wilson's barberry), this protein is Tetrahydroberberine oxidase.